The primary structure comprises 335 residues: Leucine-rich repeat-containing protein 39 (335 aa).

Residues 10-47 (AVNAVKEVWEKRIKKLNEDLKREKEFQHKLVRIWEERV) adopt a coiled-coil conformation. LRR repeat units lie at residues 84–105 (QLQE…IGRF), 107–128 (NLIV…IGLL), 130–151 (RLQE…LSNC), 153–176 (SLEK…SNLL), 177–197 (KLTH…AVLN), 200–221 (ALEW…IERM), 223–244 (NLHT…ISNM), 246–267 (NLGT…MEEM), and 269–290 (NLRF…PPSE).

In terms of assembly, interacts with MYH7 (via C-terminus). As to expression, highly expressed in skeletal muscle and heart. Not detected in other tissues tested.

Its subcellular location is the cytoplasm. It localises to the myofibril. The protein resides in the sarcomere. The protein localises to the m line. Its function is as follows. Component of the sarcomeric M-band which plays a role in myocyte response to biomechanical stress. May regulate expression of other M-band proteins via an SRF-dependent pathway. Important for normal contractile function in heart. This is Leucine-rich repeat-containing protein 39 (LRRC39) from Homo sapiens (Human).